The following is a 157-amino-acid chain: MVRNIMAKEFSRTRRIAQQLQQELAQVLQRDMKDPRIGFVTVNDVDVSRDLSYAKVFVTFFEEDKAVVQEKLNALISAAPYIRTLVAGRMKLRVMPELRFIYDSSLVEGMRMSNLVSQVINQDKAKQQQFGSEEASVEDEVLGDDVADDADETEGKD.

The segment at 127–157 is disordered; sequence QQQFGSEEASVEDEVLGDDVADDADETEGKD. Over residues 135-157 the composition is skewed to acidic residues; the sequence is ASVEDEVLGDDVADDADETEGKD.

Belongs to the RbfA family. Monomer. Binds 30S ribosomal subunits, but not 50S ribosomal subunits or 70S ribosomes.

It is found in the cytoplasm. Its function is as follows. One of several proteins that assist in the late maturation steps of the functional core of the 30S ribosomal subunit. Associates with free 30S ribosomal subunits (but not with 30S subunits that are part of 70S ribosomes or polysomes). Required for efficient processing of 16S rRNA. May interact with the 5'-terminal helix region of 16S rRNA. In Shewanella baltica (strain OS195), this protein is Ribosome-binding factor A.